The chain runs to 179 residues: Inner membrane-spanning protein YciB (179 aa).

The next 5 helical transmembrane spans lie at 22–42 (IYAATSALIVATAIVLIYSWV), 50–70 (MALITFVLVAVFGGLTLFFHN), 76–96 (WKVTVIYALFAGALLISQWVM), 121–141 (LAWALFFIACGLANIYIAFWL), and 149–169 (FKVFGLTALTLIFTLLSGVYI).

Belongs to the YciB family.

Its subcellular location is the cell inner membrane. In terms of biological role, plays a role in cell envelope biogenesis, maintenance of cell envelope integrity and membrane homeostasis. This chain is Inner membrane-spanning protein YciB, found in Salmonella agona (strain SL483).